Reading from the N-terminus, the 195-residue chain is 3-isopropylmalate dehydratase small subunit (195 aa).

This sequence belongs to the LeuD family. LeuD type 1 subfamily. In terms of assembly, heterodimer of LeuC and LeuD.

It catalyses the reaction (2R,3S)-3-isopropylmalate = (2S)-2-isopropylmalate. It functions in the pathway amino-acid biosynthesis; L-leucine biosynthesis; L-leucine from 3-methyl-2-oxobutanoate: step 2/4. In terms of biological role, catalyzes the isomerization between 2-isopropylmalate and 3-isopropylmalate, via the formation of 2-isopropylmaleate. This chain is 3-isopropylmalate dehydratase small subunit, found in Corynebacterium kroppenstedtii (strain DSM 44385 / JCM 11950 / CIP 105744 / CCUG 35717).